A 604-amino-acid chain; its full sequence is Putative ankyrin repeat protein L56 (604 aa).

ANK repeat units follow at residues 77–106 (IDRY…DILV), 135–164 (FFKS…NADG), 166–189 (LSAC…YDDN), 190–219 (TIYH…EDKR), 221–247 (NVFI…KWKI), 248–277 (DVEF…DSKY), 314–341 (KFSK…NENV), 342–371 (DLRE…EFTD), 380–410 (EHIT…SRSY), 445–474 (YSQA…DIKP), 475–504 (ITNI…DITI), 505–534 (NDNR…DIRT), and 535–565 (DDDY…EPSN).

In Acanthamoeba polyphaga (Amoeba), this protein is Putative ankyrin repeat protein L56.